A 631-amino-acid chain; its full sequence is Acurin A biosynthesis cluster transcription regulator (631 aa).

The segment covering 1 to 11 (MSPNMSLTASH) has biased composition (polar residues). The tract at residues 1 to 28 (MSPNMSLTASHPQQPQPTPQSKAQLTRQ) is disordered. The zn(2)-C6 fungal-type DNA-binding region spans 30–62 (CNRCHASKLKCLRPPGVTTSKSCIRCIKADTEC). Disordered stretches follow at residues 64–141 (YDPP…PDNR), 489–522 (CSSSASTSSTASTTSCSTRAPPSSATGGAHHPAT), and 536–573 (HSSSDHLFSQPEGRGYAPYNHAFHPPPPSRHTHNYPTP). The segment covering 88–99 (IEAREPEVTDPR) has biased composition (basic and acidic residues). Polar residues predominate over residues 119 to 128 (NGSLAPSSAA).

It localises to the nucleus. Its function is as follows. Transcription factor that positively regulates the expression of the cluster that mediates the biosynthesis of acurin A, a highly reduced polyketide coupled to a serine via a peptide bond. This Aspergillus aculeatus (strain ATCC 16872 / CBS 172.66 / WB 5094) protein is Acurin A biosynthesis cluster transcription regulator.